A 367-amino-acid polypeptide reads, in one-letter code: DNA replication and repair protein RecF (367 aa).

Gly-30–Thr-37 is an ATP binding site.

This sequence belongs to the RecF family.

It is found in the cytoplasm. Its function is as follows. The RecF protein is involved in DNA metabolism; it is required for DNA replication and normal SOS inducibility. RecF binds preferentially to single-stranded, linear DNA. It also seems to bind ATP. The chain is DNA replication and repair protein RecF from Pseudomonas entomophila (strain L48).